The sequence spans 88 residues: EMBRYO SURROUNDING FACTOR 1-like protein 3 (88 aa).

Residues 1 to 22 (MKLSQIALICIVIASLFAMHEC) form the signal peptide. 3 disulfide bridges follow: Cys41–Cys56, Cys54–Cys80, and Cys57–Cys67.

It belongs to the MEG family. In terms of tissue distribution, expressed in stems, leaves and flowers.

The protein is EMBRYO SURROUNDING FACTOR 1-like protein 3 (ESFL3) of Arabidopsis thaliana (Mouse-ear cress).